Consider the following 221-residue polypeptide: ATP-dependent dethiobiotin synthetase BioD (221 aa).

D13 to Y18 provides a ligand contact to ATP. Residue T17 coordinates Mg(2+). K38 is a catalytic residue. Substrate is bound at residue S42. ATP contacts are provided by residues D51, E112 to G115, and N176 to R177. D51 and E112 together coordinate Mg(2+).

Belongs to the dethiobiotin synthetase family. Homodimer. Mg(2+) serves as cofactor.

Its subcellular location is the cytoplasm. The catalysed reaction is (7R,8S)-7,8-diammoniononanoate + CO2 + ATP = (4R,5S)-dethiobiotin + ADP + phosphate + 3 H(+). It participates in cofactor biosynthesis; biotin biosynthesis; biotin from 7,8-diaminononanoate: step 1/2. In terms of biological role, catalyzes a mechanistically unusual reaction, the ATP-dependent insertion of CO2 between the N7 and N8 nitrogen atoms of 7,8-diaminopelargonic acid (DAPA, also called 7,8-diammoniononanoate) to form a ureido ring. This Brachyspira hyodysenteriae (strain ATCC 49526 / WA1) protein is ATP-dependent dethiobiotin synthetase BioD.